The sequence spans 665 residues: Protein-arginine deiminase type-2 (665 aa).

Ca(2+)-binding residues include Asp-123, Asp-125, Asp-127, Val-129, Glu-131, Asn-154, Asp-156, Glu-158, Asp-166, Asp-169, Lys-171, Asp-177, Asp-180, Glu-354, Asp-389, Phe-408, Leu-411, and Glu-412. The active-site Nucleophile is Cys-647.

It belongs to the protein arginine deiminase family. Homodimer. Ca(2+) serves as cofactor. As to expression, detected in keratinocytes in epidermis (at protein level).

It is found in the cytoplasm. The catalysed reaction is L-arginyl-[protein] + H2O = L-citrullyl-[protein] + NH4(+). In terms of biological role, catalyzes the deimination of arginine residues of proteins. The sequence is that of Protein-arginine deiminase type-2 (PADI2) from Homo sapiens (Human).